A 90-amino-acid polypeptide reads, in one-letter code: MSRTIFCTFLNKEADGLDFQLYPGELGKRIFNEISKEAWGQWMAKQTMLINEKKLNTMNPDDRKLLEQEMVRFLFEGHDVHIDGYTPPEK.

This sequence belongs to the Fe(2+)-trafficking protein family. In terms of assembly, monomer.

Functionally, could be a mediator in iron transactions between iron acquisition and iron-requiring processes, such as synthesis and/or repair of Fe-S clusters in biosynthetic enzymes. The polypeptide is Probable Fe(2+)-trafficking protein (Proteus mirabilis (strain HI4320)).